Consider the following 459-residue polypeptide: Proton-coupled folate transporter (459 aa).

N-acetylmethionine is present on Met-1. Residues 1 to 25 (MEGRANSPGEPRAWPTRSVLCRGCV) lie on the Cytoplasmic side of the membrane. A helical membrane pass occupies residues 26–44 (EPLVFLANFALVLQGPVTT). Topologically, residues 45–82 (QYLWHRFSADLGYNGTRHRDSCSNHSVDPIAQEVETLT) are extracellular. Residues Asn-58 and Asn-68 are each glycosylated (N-linked (GlcNAc...) asparagine). An intrachain disulfide couples Cys-66 to Cys-298. The chain crosses the membrane as a helical span at residues 83–108 (SHWTLYMNVGGFLVGLFSSTLLGAWS). Residues 109 to 112 (DCVG) are Cytoplasmic-facing. The helical transmembrane segment at 113-135 (RRPLLVLASLGLLLQTVLSIFVV) threads the bilayer. Topologically, residues 136–140 (QLHLH) are extracellular. A helical membrane pass occupies residues 141 to 154 (IGYLVLGRILCALL). Residues 155–177 (GDFSGLLAASFASVADVSSSRTR) are Cytoplasmic-facing. Residues Asp-156 and Glu-185 each contribute to the H(+) site. A helical membrane pass occupies residues 178-203 (TIRMALLEACIGVAGMLASFIGGFLL). Residues 204–208 (QEQVY) are Extracellular-facing. A helical membrane pass occupies residues 209–227 (VNPFWLALAVLTVMTLYAA). Over 228–266 (FCFGETVKERTPTRLFTLRHHRSVIQLYVTQAPEKSRKH) the chain is Cytoplasmic. The helical transmembrane segment at 267 to 289 (LALYSLAIFVMITVHLGAQDILT) threads the bilayer. His-281 serves as a coordination point for H(+). Residues 290-302 (LYELSAPLCWDSR) are Extracellular-facing. A helical transmembrane segment spans residues 303 to 325 (LISYGSAAQQLPYLTSLLGLRLL). Over 326-331 (QYCLAD) the chain is Cytoplasmic. A helical transmembrane segment spans residues 332-351 (TWVAEIGLVFNILGMMVFAF). The Extracellular portion of the chain corresponds to 352–355 (ATIT). Residues 356 to 376 (PLMFTGYGLLFLSLVVTPIIR) traverse the membrane as a helical segment. Residues 377–388 (AKLSRLVRQSEQ) are Cytoplasmic-facing. The helical transmembrane segment at 389–414 (GALFSALACVNGLAMLMASGIFNSLY) threads the bilayer. The Extracellular segment spans residues 415–422 (PATLNLMK). A helical transmembrane segment spans residues 423 to 441 (GFPFLLAAGLLFIPAILMG). The Cytoplasmic segment spans residues 442 to 459 (ILERDNHCPEFQEFSQSP). A Phosphoserine modification is found at Ser-458.

It belongs to the major facilitator superfamily. SLC46A family. In terms of assembly, monomer. In terms of tissue distribution, expressed in retina and retinal pigment epithelium.

It localises to the cell membrane. The protein resides in the apical cell membrane. The protein localises to the basolateral cell membrane. It is found in the endosome membrane. Its subcellular location is the cytoplasm. It catalyses the reaction folate(in) + H(+)(in) = folate(out) + H(+)(out). The catalysed reaction is (6S)-5-methyl-5,6,7,8-tetrahydrofolate(in) + H(+)(in) = (6S)-5-methyl-5,6,7,8-tetrahydrofolate(out) + H(+)(out). The enzyme catalyses methotrexate(in) + H(+)(in) = methotrexate(out) + H(+)(out). It carries out the reaction pemetrexed(in) + H(+)(in) = pemetrexed(out) + H(+)(out). Its function is as follows. Proton-coupled folate symporter that mediates folate absorption using an H(+) gradient as a driving force. Involved in the intestinal absorption of folates at the brush-border membrane of the proximal jejunum, and the transport from blood to cerebrospinal fluid across the choroid plexus. Functions at acidic pH via alternate outward- and inward-open conformation states. Protonation of residues in the outward open state primes the protein for transport. Binding of folate promotes breaking of salt bridge network and subsequent closure of the extracellular gate, leading to the inward-open state and release of protons and folate. Also able to transport antifolate drugs, such as methotrexate and pemetrexed. Involved in FOLR1-mediated endocytosis by serving as a route of export of folates from acidified endosomes. Also acts as a lower-affinity, pH-independent heme carrier protein and constitutes the main importer of heme in the intestine. Imports heme in the retina and retinal pigment epithelium, in neurons of the hippocampus, in hepatocytes and in the renal epithelial cells. Hence, participates in the trafficking of heme and increases intracellular iron content. The polypeptide is Proton-coupled folate transporter (Bos taurus (Bovine)).